The following is a 199-amino-acid chain: Dephospho-CoA kinase (199 aa).

Residues 3-199 (KVGLTGGICS…DLLEFFTLYQ (197 aa)) form the DPCK domain. 11-16 (CSGKST) lines the ATP pocket.

The protein belongs to the CoaE family.

The protein localises to the cytoplasm. The enzyme catalyses 3'-dephospho-CoA + ATP = ADP + CoA + H(+). Its pathway is cofactor biosynthesis; coenzyme A biosynthesis; CoA from (R)-pantothenate: step 5/5. In terms of biological role, catalyzes the phosphorylation of the 3'-hydroxyl group of dephosphocoenzyme A to form coenzyme A. The polypeptide is Dephospho-CoA kinase (Clostridium perfringens (strain 13 / Type A)).